The following is a 1165-amino-acid chain: Chitin synthase 3 (1165 aa).

At 1–170 (MTGLNGDDPD…ETNDTLSFWQ (170 aa)) the chain is on the cytoplasmic side. Disordered regions lie at residues 19–53 (DEESLLRSRHSVGSGAPHRQGSLVRPERSRLNNPD) and 74–97 (PSSTGVNPNATRRSGSLRSKGSVR). Residues 74–92 (PSSTGVNPNATRRSGSLRS) are compositionally biased toward polar residues. Residue Lys136 forms a Glycyl lysine isopeptide (Lys-Gly) (interchain with G-Cter in ubiquitin) linkage. A helical membrane pass occupies residues 171–191 (MYCYFITFWAPAPILAFCGMP). The Extracellular portion of the chain corresponds to 192 to 340 (KKERQMAWRE…PNFTVENYAG (149 aa)). Residues Asn303 and Asn332 are each glycosylated (N-linked (GlcNAc...) asparagine). A helical membrane pass occupies residues 341-354 (WNCHTSKEDRDAFY). The Cytoplasmic portion of the chain corresponds to 355-452 (GLKSKADVYF…SKTVGCIASD (98 aa)). Residues 453 to 473 (VVLYVSLVFILSVVIIKFIIA) traverse the membrane as a helical segment. Residues 474–891 (CYFRWTVARK…EYYISHHQAK (418 aa)) lie on the Extracellular side of the membrane. Ser537 carries the phosphoserine modification. The residue at position 538 (Thr538) is a Phosphothreonine. A helical membrane pass occupies residues 892–910 (AFESVFGSVTCLPGCFSMY). Residues 911-1029 (RIKSPKGSDG…SMQFVIGIEL (119 aa)) lie on the Cytoplasmic side of the membrane. The helical transmembrane segment at 1030 to 1050 (IGTMVLPLAICFTIYVIIFAI) threads the bilayer. Residues 1051-1055 (VSKPT) lie on the Extracellular side of the membrane. Residues 1056 to 1076 (PVITLVLLAIILGLPGLIVVI) traverse the membrane as a helical segment. The Cytoplasmic segment spans residues 1077-1165 (TATRWSYLWW…RKEESDSFVA (89 aa)).

This sequence belongs to the chitin synthase family. Class IV subfamily. In terms of assembly, homodimer. May form higher order oligomers. Seems to interact with BNI4 and SKT5 which link CHS3 to septins. Glycosylated. Post-translationally, palmitoylated by PFA4; required for proper export from the ER.

It localises to the cell membrane. The protein resides in the bud neck. It is found in the cytoplasmic vesicle membrane. The enzyme catalyses [(1-&gt;4)-N-acetyl-beta-D-glucosaminyl](n) + UDP-N-acetyl-alpha-D-glucosamine = [(1-&gt;4)-N-acetyl-beta-D-glucosaminyl](n+1) + UDP + H(+). Its function is as follows. Polymerizes chitin, a structural polymer of the cell wall and septum, by transferring the sugar moiety of UDP-GlcNAc to the non-reducing end of the growing chitin polymer. Appears to be responsible for synthesis of the majority of the chitin found in the cell wall periphery. It is involved in the synthesis of the chitin ring that forms in the cell wall just before bud emergence. This ring remains at the base of the bud as the bud grows and ultimately forms part of the bud scar marking the division site on the mother cell. Also catalyzes the synthesis of chitin laid down during mating and spore cell-wall synthesis. This is Chitin synthase 3 from Saccharomyces cerevisiae (strain ATCC 204508 / S288c) (Baker's yeast).